A 420-amino-acid chain; its full sequence is Serine/threonine-protein phosphatase 4 regulatory subunit 2-A (420 aa).

Residues 157–420 (GNTSAFPDRN…ETADDNMEQD (264 aa)) form a disordered region. The segment covering 182 to 195 (SLSSNVATNGLPDS) has biased composition (polar residues). The segment covering 196-210 (TESKEQASEQSERTV) has biased composition (basic and acidic residues). Positions 212 to 224 (ESSASEAESHSGA) are enriched in low complexity. Positions 229–250 (HRDDEDATHAETHEAKRLKFDK) are enriched in basic and acidic residues. Positions 251–266 (EEEEEEDDEEEDEDGD) are enriched in acidic residues. Residues 267–276 (EIKKELDEPH) are compositionally biased toward basic and acidic residues. The segment covering 278–296 (PCTSVAESSSDVPQSSTDV) has biased composition (polar residues). Residues 318–332 (GVDRSTSEDSPDPSH) show a composition bias toward basic and acidic residues. The segment covering 346-364 (AEEEEEEESAEAQETEETN) has biased composition (acidic residues). The segment covering 368–394 (SSSSNNSSDEGVSSAETPSASPSSSTE) has biased composition (low complexity). Residues 411 to 420 (ETADDNMEQD) show a composition bias toward acidic residues.

This sequence belongs to the PPP4R2 family. Serine/threonine-protein phosphatase 4 (PP4) occurs in different assemblies of the catalytic and one or more regulatory subunits.

Functionally, regulatory subunit of serine/threonine-protein phosphatase 4 (PP4C). In Danio rerio (Zebrafish), this protein is Serine/threonine-protein phosphatase 4 regulatory subunit 2-A (ppp4r2a).